We begin with the raw amino-acid sequence, 142 residues long: Putative pre-16S rRNA nuclease (142 aa).

The protein belongs to the YqgF nuclease family.

It localises to the cytoplasm. In terms of biological role, could be a nuclease involved in processing of the 5'-end of pre-16S rRNA. The polypeptide is Putative pre-16S rRNA nuclease (Photobacterium profundum (strain SS9)).